We begin with the raw amino-acid sequence, 264 residues long: 3-methyl-2-oxobutanoate hydroxymethyltransferase (264 aa).

The Mg(2+) site is built by aspartate 44 and aspartate 83. 3-methyl-2-oxobutanoate contacts are provided by residues 44 to 45 (DS), aspartate 83, and lysine 111. Glutamate 113 is a binding site for Mg(2+). Residue glutamate 180 is the Proton acceptor of the active site.

Belongs to the PanB family. As to quaternary structure, homodecamer; pentamer of dimers. It depends on Mg(2+) as a cofactor.

Its subcellular location is the cytoplasm. The catalysed reaction is 3-methyl-2-oxobutanoate + (6R)-5,10-methylene-5,6,7,8-tetrahydrofolate + H2O = 2-dehydropantoate + (6S)-5,6,7,8-tetrahydrofolate. It functions in the pathway cofactor biosynthesis; (R)-pantothenate biosynthesis; (R)-pantoate from 3-methyl-2-oxobutanoate: step 1/2. Catalyzes the reversible reaction in which hydroxymethyl group from 5,10-methylenetetrahydrofolate is transferred onto alpha-ketoisovalerate to form ketopantoate. The protein is 3-methyl-2-oxobutanoate hydroxymethyltransferase of Marinobacter nauticus (strain ATCC 700491 / DSM 11845 / VT8) (Marinobacter aquaeolei).